Reading from the N-terminus, the 405-residue chain is MAAPSQEDPSLERHFKGHRDAVTCVDFSLNTKHLASGSMDSTLMIWHMKPQSRAYRFTGHKDAVTCVNFSPSGHLLASGSRDKTVRIWVPNVKGESTVFRAHTATVRSVHFCSDGQSLVTASDDKTVKVWSTHRQRFLFSLTQHINWVRCAKFSPDGRLIVSASDDKTVKLWDKTSRECIHSYCEHGGFVTYVDFHPSGTCIAAAGMDNTVKVWDARTHRLLQHYQLHSAAVNALSFHPSGNYLITASSDSTLKILDLMEGRLLYTLHGHQGPATTVAFSRTGEYFASGGSDEQVMVWKSNFDIVDYGDMKARRPPPLTSSSGTLPKMDLPVPPGRDRSLESVQGEPQESISMPQTLTSTLEHIVGQLDILTQTVSILEQRLTLTEDRLKQCLENQQLIMQRTPP.

7 WD repeats span residues 17–56 (GHRD…RAYR), 59–98 (GHKD…ESTV), 101–140 (AHTA…FLFS), 143–182 (QHIN…CIHS), 185–224 (EHGG…LLQH), 227–266 (LHSA…LLYT), and 269–308 (GHQG…VDYG). Positions 313 to 352 (RRPPPLTSSSGTLPKMDLPVPPGRDRSLESVQGEPQESIS) are disordered. Over residues 341-352 (ESVQGEPQESIS) the composition is skewed to polar residues. A coiled-coil region spans residues 367–395 (QLDILTQTVSILEQRLTLTEDRLKQCLEN).

This sequence belongs to the WD repeat POC1 family. As to quaternary structure, interacts with POC1B. Widely expressed in embryonic and adult tissues.

The protein localises to the cytoplasm. It is found in the cytoskeleton. It localises to the microtubule organizing center. The protein resides in the centrosome. Its subcellular location is the centriole. The protein localises to the cilium basal body. It is found in the spindle pole. Its function is as follows. Plays an important role in centriole assembly and/or stability and ciliogenesis. Involved in early steps of centriole duplication, as well as in the later steps of centriole length control. Acts in concert with POC1B to ensure centriole integrity and proper mitotic spindle formation. This Mus musculus (Mouse) protein is POC1 centriolar protein homolog A (Poc1a).